The following is a 173-amino-acid chain: Crossover junction endodeoxyribonuclease RuvC (173 aa).

Residues D8, E67, and D139 contribute to the active site. Mg(2+) contacts are provided by D8, E67, and D139.

This sequence belongs to the RuvC family. In terms of assembly, homodimer which binds Holliday junction (HJ) DNA. The HJ becomes 2-fold symmetrical on binding to RuvC with unstacked arms; it has a different conformation from HJ DNA in complex with RuvA. In the full resolvosome a probable DNA-RuvA(4)-RuvB(12)-RuvC(2) complex forms which resolves the HJ. Mg(2+) is required as a cofactor.

It is found in the cytoplasm. The enzyme catalyses Endonucleolytic cleavage at a junction such as a reciprocal single-stranded crossover between two homologous DNA duplexes (Holliday junction).. Functionally, the RuvA-RuvB-RuvC complex processes Holliday junction (HJ) DNA during genetic recombination and DNA repair. Endonuclease that resolves HJ intermediates. Cleaves cruciform DNA by making single-stranded nicks across the HJ at symmetrical positions within the homologous arms, yielding a 5'-phosphate and a 3'-hydroxyl group; requires a central core of homology in the junction. The consensus cleavage sequence is 5'-(A/T)TT(C/G)-3'. Cleavage occurs on the 3'-side of the TT dinucleotide at the point of strand exchange. HJ branch migration catalyzed by RuvA-RuvB allows RuvC to scan DNA until it finds its consensus sequence, where it cleaves and resolves the cruciform DNA. This chain is Crossover junction endodeoxyribonuclease RuvC, found in Tolumonas auensis (strain DSM 9187 / NBRC 110442 / TA 4).